The following is a 211-amino-acid chain: MVDVITIPATLRTEFGKGYARRVRANDKIPAVIYGHGAEPLHVILPGHEMMLASRNSNAVLDINVDGEGHLAMIKEVQRHAVRPEILHIDLLTVRRGERVEVEIPVHVEGEVAPTAIHNVEENVLVVEADALKVPEYLTVDITDLEVGEHVYAKDVTLPGNVTLVSDPELLVVNVSEPVEQDLGEESETEEEGAEGEKPAESTGEEPGDDE.

Residues 175 to 211 (VSEPVEQDLGEESETEEEGAEGEKPAESTGEEPGDDE) are disordered. Positions 179-194 (VEQDLGEESETEEEGA) are enriched in acidic residues.

This sequence belongs to the bacterial ribosomal protein bL25 family. CTC subfamily. As to quaternary structure, part of the 50S ribosomal subunit; part of the 5S rRNA/L5/L18/L25 subcomplex. Contacts the 5S rRNA. Binds to the 5S rRNA independently of L5 and L18.

Its function is as follows. This is one of the proteins that binds to the 5S RNA in the ribosome where it forms part of the central protuberance. This Kocuria rhizophila (strain ATCC 9341 / DSM 348 / NBRC 103217 / DC2201) protein is Large ribosomal subunit protein bL25.